The following is a 105-amino-acid chain: NADH-quinone oxidoreductase subunit K (105 aa).

3 helical membrane passes run 8 to 28 (VTNGLIFSTLLFVISVAGIII), 33 to 53 (ILILLMSIELMLLAVNTNFLI), and 65 to 85 (VFVFFIMAVAAAETAIGLAIV).

It belongs to the complex I subunit 4L family. NDH-1 is composed of 14 different subunits. Subunits NuoA, H, J, K, L, M, N constitute the membrane sector of the complex.

The protein localises to the cell inner membrane. The catalysed reaction is a quinone + NADH + 5 H(+)(in) = a quinol + NAD(+) + 4 H(+)(out). Functionally, NDH-1 shuttles electrons from NADH, via FMN and iron-sulfur (Fe-S) centers, to quinones in the respiratory chain. The immediate electron acceptor for the enzyme in this species is believed to be ubiquinone. Couples the redox reaction to proton translocation (for every two electrons transferred, four hydrogen ions are translocated across the cytoplasmic membrane), and thus conserves the redox energy in a proton gradient. The polypeptide is NADH-quinone oxidoreductase subunit K (Francisella philomiragia subsp. philomiragia (strain ATCC 25017 / CCUG 19701 / FSC 153 / O#319-036)).